A 310-amino-acid polypeptide reads, in one-letter code: Serine/threonine-protein kinase pim-2 (310 aa).

The Protein kinase domain occupies 30–290 (YTMGNLLGSG…LEQILQHPWM (261 aa)). ATP contacts are provided by residues 36–44 (LGSGGFGSV) and Lys-59. Catalysis depends on Asp-167, which acts as the Proton acceptor.

The protein belongs to the protein kinase superfamily. CAMK Ser/Thr protein kinase family. PIM subfamily. Autophosphorylated.

The enzyme catalyses L-seryl-[protein] + ATP = O-phospho-L-seryl-[protein] + ADP + H(+). The catalysed reaction is L-threonyl-[protein] + ATP = O-phospho-L-threonyl-[protein] + ADP + H(+). In terms of biological role, proto-oncogene with serine/threonine kinase activity involved in cell survival and cell proliferation. The polypeptide is Serine/threonine-protein kinase pim-2 (pim2) (Danio rerio (Zebrafish)).